The primary structure comprises 230 residues: A-type ATP synthase subunit D (230 aa).

Residues 204-230 (AKKEEEEDALAAEEEAEEEPEAVTADD) form a disordered region. Residues 208-230 (EEEDALAAEEEAEEEPEAVTADD) are compositionally biased toward acidic residues.

The protein belongs to the V-ATPase D subunit family. In terms of assembly, has multiple subunits with at least A(3), B(3), C, D, E, F, H, I and proteolipid K(x).

The protein localises to the cell membrane. Functionally, component of the A-type ATP synthase that produces ATP from ADP in the presence of a proton gradient across the membrane. In Haloarcula marismortui (strain ATCC 43049 / DSM 3752 / JCM 8966 / VKM B-1809) (Halobacterium marismortui), this protein is A-type ATP synthase subunit D.